Consider the following 176-residue polypeptide: Shikimate kinase (176 aa).

ATP is bound at residue 14–19 (GAGKST). Position 18 (Ser18) interacts with Mg(2+). Residues Asp36, Arg60, and Gly83 each contribute to the substrate site. Arg121 contacts ATP. Residue Arg140 participates in substrate binding.

This sequence belongs to the shikimate kinase family. In terms of assembly, monomer. Requires Mg(2+) as cofactor.

The protein resides in the cytoplasm. It carries out the reaction shikimate + ATP = 3-phosphoshikimate + ADP + H(+). It participates in metabolic intermediate biosynthesis; chorismate biosynthesis; chorismate from D-erythrose 4-phosphate and phosphoenolpyruvate: step 5/7. Catalyzes the specific phosphorylation of the 3-hydroxyl group of shikimic acid using ATP as a cosubstrate. The chain is Shikimate kinase from Francisella philomiragia subsp. philomiragia (strain ATCC 25017 / CCUG 19701 / FSC 153 / O#319-036).